The primary structure comprises 200 residues: Recombination protein RecR (200 aa).

Residues 57 to 72 (CQHCRTFTENSLCDIC) form a C4-type zinc finger. Residues 81–176 (GQLCIVETPA…NITRIAHGVP (96 aa)) enclose the Toprim domain.

This sequence belongs to the RecR family.

May play a role in DNA repair. It seems to be involved in an RecBC-independent recombinational process of DNA repair. It may act with RecF and RecO. This Tolumonas auensis (strain DSM 9187 / NBRC 110442 / TA 4) protein is Recombination protein RecR.